Consider the following 701-residue polypeptide: Probable cytosolic oligopeptidase A (701 aa).

N-acetylalanine is present on alanine 2. Residues 148–194 (IALEDDKREEFNKIEQELEKLSHKFSENVLDATKKFEKLITDKKEIE) are a coiled coil. Histidine 483 contributes to the Zn(2+) binding site. Residue glutamate 484 is part of the active site. Residues histidine 487 and glutamate 513 each coordinate Zn(2+). 615–621 (HIFAGGY) is a substrate binding site.

The protein belongs to the peptidase M3 family. Zn(2+) serves as cofactor.

It localises to the cytoplasm. The protein resides in the cytosol. The catalysed reaction is Hydrolysis of oligopeptides, with broad specificity. Gly or Ala commonly occur as P1 or P1' residues, but more distant residues are also important, as is shown by the fact that Z-Gly-Pro-Gly-|-Gly-Pro-Ala is cleaved, but not Z-(Gly)(5).. Its activity is regulated as follows. Inhibited by salicylic acid. In terms of biological role, oligopeptidase that may be involved in the degradation of proteasome-generated peptides. Binds salicylic acid. The chain is Probable cytosolic oligopeptidase A from Arabidopsis thaliana (Mouse-ear cress).